An 870-amino-acid chain; its full sequence is MSLITIFAFFIKATLVLSLDILTPTTLTGDQTFNEDVSVVSSLTLNDGSQYLFNNLLQIAPSSASVTANALAAVSVFTFSLPPSSSLSNSGTLIISNSNTGPSTEQHIVITPNVMANTGTITLSLAHTNTDSSSTLIIDPVTFYNTGTINYESIGSETNDPSLTGNILSIGSSGRTLQNLGTINLNAANSYYLLGTITENSGSINVQKGFLYVNALDFIGNTINLSTTTALAFISPVSQVVRVRGVFFGNIIASVGSSGTFSYNTQTGILTVTTNGVYSYDIGCGYNPALMSGQQETLSFQGNLYDTFLVLVNQPIPSDLTCAAVSSSITPSSSVEPSSSVEPSSSVEPSSSVEPSSSVEPSSSVEPSSSVEPSSSVEPSSSVEPSSSVEPSSSVEPSSSVEPSSSVEPSSSVEPSSSVEPSSSVEPSSSVEPSSSVEPSSSVEPSSSVEPSSPAVPSSSAEPSSSVVPPITPIPSSSVVSASVFDTSSTLPSSPTVPTSSVSPSSPTVPTSSVSPSSPTVPTSSESPSTLSTPSSSAAPSSFCPTCVSSGTPPAPSSSAVVPTSSAGGGNGGDNGQPGADGQPGAAGQPGAAGQPGAAGQPGAAGQPGAAGQPGAAGQPGAAGQPGAAGQPGAAGQPGAAGQPGAGSGGGSEQPTPGAGAGSGSADGNQSGTSSGTGNGQAGSGQAGSGQVGSGQAGAGQAGSGQAGAGQAGSGQAGAGQAGLDNTASGQSEGGQASAMDGDQSGRGGQSNSGSLLQPNAQQGTGSGTGSDTGADQASGESPGQIGDAQPGSGTDQSSGRHSLAAEARTSQSHSLAADARTRSTTRQTSVIAPGTAPGTAVVTTFHGCGTVNHKGMINILLALALLVLL.

Residues 1 to 18 form the signal peptide; that stretch reads MSLITIFAFFIKATLVLS. A glycan (N-linked (GlcNAc...) asparagine) is linked at Asn-224. Residues Cys-284 and Cys-322 are joined by a disulfide bond. The tract at residues 329–835 is disordered; it reads ITPSSSVEPS…TRQTSVIAPG (507 aa). Over residues 331–566 the composition is skewed to low complexity; it reads PSSSVEPSSS…SSSAVVPTSS (236 aa). Residues 567–576 are compositionally biased toward gly residues; sequence AGGGNGGDNG. Over residues 577 to 641 the composition is skewed to low complexity; that stretch reads QPGADGQPGA…PGAAGQPGAA (65 aa). The span at 642–652 shows a compositional bias: gly residues; that stretch reads GQPGAGSGGGS. Asn-669 is a glycosylation site (N-linked (GlcNAc...) asparagine). Residues 675–721 are compositionally biased toward gly residues; it reads SGTGNGQAGSGQAGSGQVGSGQAGAGQAGSGQAGAGQAGSGQAGAGQ. 2 stretches are compositionally biased toward polar residues: residues 724–735 and 792–801; these read LDNTASGQSEGG and GSGTDQSSGR.

The protein localises to the secreted. It localises to the cell wall. May play a role in cell adhesion. This Candida glabrata (strain ATCC 2001 / BCRC 20586 / JCM 3761 / NBRC 0622 / NRRL Y-65 / CBS 138) (Yeast) protein is Adhesin AWP1.